The primary structure comprises 857 residues: Protein translocase subunit SecA (857 aa).

ATP is bound by residues Q88, 106–110, and D496; that span reads GEGKT. Zn(2+)-binding residues include C833, C835, C844, and C845.

This sequence belongs to the SecA family. Monomer and homodimer. Part of the essential Sec protein translocation apparatus which comprises SecA, SecYEG and auxiliary proteins SecDF-YajC and YidC. It depends on Zn(2+) as a cofactor.

Its subcellular location is the cell inner membrane. The protein resides in the cytoplasm. It carries out the reaction ATP + H2O + cellular proteinSide 1 = ADP + phosphate + cellular proteinSide 2.. Part of the Sec protein translocase complex. Interacts with the SecYEG preprotein conducting channel. Has a central role in coupling the hydrolysis of ATP to the transfer of proteins into and across the cell membrane, serving as an ATP-driven molecular motor driving the stepwise translocation of polypeptide chains across the membrane. This is Protein translocase subunit SecA from Sulfurimonas denitrificans (strain ATCC 33889 / DSM 1251) (Thiomicrospira denitrificans (strain ATCC 33889 / DSM 1251)).